A 336-amino-acid polypeptide reads, in one-letter code: E3 ubiquitin-protein ligase RING2 (336 aa).

Ser-2 is subject to N-acetylserine. The tract at residues 2–179 is interaction with HIP2; it reads SQAVQTNGTQ…AEDNGDSSHC (178 aa). Ser-41 is modified (phosphoserine). The RING-type zinc finger occupies 51-91; sequence CPICLDMLKNTMTTKECLHRFCADCIITALRSGNKECPTCR. The interval 93-98 is interaction with nucleosomes via an acidic patch on histone H2A and histone H2B; the sequence is KLVSKR. Lys-112 participates in a covalent cross-link: Glycyl lysine isopeptide (Lys-Gly) (interchain with G-Cter in ubiquitin). Ser-143 and Ser-168 each carry phosphoserine. The tract at residues 157-213 is disordered; it reads QRGKKQQIENGSGAEDNGDSSHCSNASTHSNQEAGPSNKRTKTSDDSGLEPDNNNAA. Positions 176–191 are enriched in polar residues; it reads SSHCSNASTHSNQEAG. Residues Lys-249 and Lys-323 each participate in a glycyl lysine isopeptide (Lys-Gly) (interchain with G-Cter in SUMO2) cross-link.

Component of chromatin-associated Polycomb (PcG) complexes. Component of a number of PRC1-like complexes; these complexes contain either the polycomb group ring finger protein PCGF1, or PCGF2, or PCGF3, or BMI1, or PCGF5, or PCGF6. Distinct PRC1-like complexes are composed of a RING1 subunit (RING1B or RING1A), one of the six PCGF proteins (PCGF1, PCGF2, PCGF3, BMI1, PCGF5 or PCGF6), one PHC protein (PHC1, PHC2 or PHC3) and one of the CBX proteins (CBX2, CBX4, CBX6, CBX7 or CBX8). Part of a complex that contains RNF2, UB2D3 and BMI1; within that complex RNF2 and BMI1 form a tight heterodimer, where UB2D3 interacts only with RNF2. The complex composed of RNF2, UB2D3 and BMI1 binds nucleosomes, and has activity only with nucleosomal histone H2A. Part of a complex that contains PCGF5, RNF2 and UBE2D3. Part of a complex that contains AUTS2, PCGF5, RNF2, CSNK2B and RYBP. Interacts with CBX6 and CBX8. Interacts with PHC1, PCGF2, RYBP, CBX7, CBX4, CBX2, RNF1/RING1, BMI1 and PHC2. Interaction with RYBP and CBX7 is mutually exclusive; both compete for the same binding site on RNF2. Component of repressive BCOR complex containing a Polycomb group subcomplex at least composed of RYBP, PCGF1, BCOR and RING1. Interacts with CBX2 and PHC1. Interacts with CHTOP. Interacts with AURKB. Part of the E2F6.com-1 complex in G0 phase composed of E2F6, MGA, MAX, TFDP1, CBX3, BAT8, EUHMTASE1, RNF1/RING1, RNF2/RING2, MBLR, L3MBTL2 and YAF2. Component of some MLL1/MLL complex, at least composed of the core components KMT2A/MLL1, ASH2L, HCFC1/HCF1, WDR5 and RBBP5, as well as the facultative components BACC1, CHD8, E2F6, HSP70, INO80C, KANSL1, LAS1L, MAX, MCRS1, MGA, MYST1/MOF, PELP1, PHF20, PRP31, RING2, RUVB1/TIP49A, RUVB2/TIP49B, SENP3, TAF1, TAF4, TAF6, TAF7, TAF9 and TEX10. Interacts with RYBP, HIP2 and TFCP2. Interacts with NUPR1. Interacts with SAMD7 in a PHC2-dependent manner. In terms of processing, monoubiquitinated, by auto-ubiquitination. Polyubiquitinated in the presence of UBE2D3 (in vitro).

It is found in the nucleus. The protein localises to the cytoplasm. Its subcellular location is the chromosome. The catalysed reaction is S-ubiquitinyl-[E2 ubiquitin-conjugating enzyme]-L-cysteine + [acceptor protein]-L-lysine = [E2 ubiquitin-conjugating enzyme]-L-cysteine + N(6)-ubiquitinyl-[acceptor protein]-L-lysine.. The protein operates within protein modification; protein ubiquitination. In terms of biological role, E3 ubiquitin-protein ligase that mediates monoubiquitination of 'Lys-119' of histone H2A (H2AK119Ub), thereby playing a central role in histone code and gene regulation. H2AK119Ub gives a specific tag for epigenetic transcriptional repression and participates in X chromosome inactivation of female mammals. May be involved in the initiation of both imprinted and random X inactivation. Essential component of a Polycomb group (PcG) multiprotein PRC1-like complex, a complex class required to maintain the transcriptionally repressive state of many genes, including Hox genes, throughout development. PcG PRC1 complex acts via chromatin remodeling and modification of histones, rendering chromatin heritably changed in its expressibility. E3 ubiquitin-protein ligase activity is enhanced by BMI1/PCGF4. Acts as the main E3 ubiquitin ligase on histone H2A of the PRC1 complex, while RING1 may rather act as a modulator of RNF2/RING2 activity. Plays a role in the transcriptional repression of genes that are required for pluripotency in embryonic stem cells, thereby contributing to differentiation of the ectodermal and endodermal germ layers. Association with the chromosomal DNA is cell-cycle dependent. In resting B- and T-lymphocytes, interaction with AURKB leads to block its activity, thereby maintaining transcription in resting lymphocytes. Also acts as a negative regulator of autophagy by mediating ubiquitination of AMBRA1, leading to its subsequent degradation. The polypeptide is E3 ubiquitin-protein ligase RING2 (RNF2) (Pongo abelii (Sumatran orangutan)).